The following is a 124-amino-acid chain: Large ribosomal subunit protein uL18 (124 aa).

Belongs to the universal ribosomal protein uL18 family. Part of the 50S ribosomal subunit; part of the 5S rRNA/L5/L18/L25 subcomplex. Contacts the 5S and 23S rRNAs.

Its function is as follows. This is one of the proteins that bind and probably mediate the attachment of the 5S RNA into the large ribosomal subunit, where it forms part of the central protuberance. The protein is Large ribosomal subunit protein uL18 of Orientia tsutsugamushi (strain Ikeda) (Rickettsia tsutsugamushi).